The sequence spans 430 residues: Adenylosuccinate synthetase (430 aa).

GTP contacts are provided by residues 12–18 (GDEGKGK) and 40–42 (GHT). Residue Asp-13 is the Proton acceptor of the active site. Mg(2+) is bound by residues Asp-13 and Gly-40. Residues 13 to 16 (DEGK), 38 to 41 (NAGH), Thr-128, Arg-142, Gln-223, Thr-238, and Arg-302 contribute to the IMP site. The Proton donor role is filled by His-41. Substrate is bound at residue 298-304 (TTTGRPR). GTP-binding positions include Arg-304, 330-332 (LLD), and 412-414 (SVG).

It belongs to the adenylosuccinate synthetase family. As to quaternary structure, homodimer. It depends on Mg(2+) as a cofactor.

The protein localises to the cytoplasm. It carries out the reaction IMP + L-aspartate + GTP = N(6)-(1,2-dicarboxyethyl)-AMP + GDP + phosphate + 2 H(+). It functions in the pathway purine metabolism; AMP biosynthesis via de novo pathway; AMP from IMP: step 1/2. Its function is as follows. Plays an important role in the de novo pathway of purine nucleotide biosynthesis. Catalyzes the first committed step in the biosynthesis of AMP from IMP. This is Adenylosuccinate synthetase from Listeria welshimeri serovar 6b (strain ATCC 35897 / DSM 20650 / CCUG 15529 / CIP 8149 / NCTC 11857 / SLCC 5334 / V8).